The following is a 195-amino-acid chain: GRF1-interacting factor 2 (195 aa).

The disordered stretch occupies residues 166–195; that stretch reads QQPETGLGGNVGLRGGKQDGADGQGKDDGK. The segment covering 171-180 has biased composition (gly residues); that stretch reads GLGGNVGLRG. Residues 181–195 are compositionally biased toward basic and acidic residues; the sequence is GKQDGADGQGKDDGK.

Belongs to the SS18 family. Interacts with GRF1. Predominantly expressed in shoot tips containing the shoot apical meristem (SAM) and flower buds. Also expressed in mature flowers.

Transcription coactivator that plays a role in the regulation of cell expansion in leaf and cotyledons tissues. Component of a network formed by miR396, the GRFs and their interacting factors (GIFs) acting in the regulation of meristem function, at least partially through the control of cell proliferation. GIFs are involved in the positive regulation of cell proliferation of lateral organs in a functionally redundant manner. The sequence is that of GRF1-interacting factor 2 (GIF2) from Arabidopsis thaliana (Mouse-ear cress).